A 606-amino-acid polypeptide reads, in one-letter code: Polypeptide N-acetylgalactosaminyltransferase 9 (606 aa).

Residues 1-6 are Cytoplasmic-facing; it reads MAVARK. The chain crosses the membrane as a helical; Signal-anchor for type II membrane protein span at residues 7 to 29; that stretch reads IRTLLTVNILVFVGIVLFSVYCR. Residues 30-606 are Lumenal-facing; sequence LQGRSQELVR…IRNWIKHARH (577 aa). The segment at 43-62 is disordered; that stretch reads GGCRPRPATPAPGSPLRSGG. 2 disulfide bridges follow: C144/C375 and C366/C445. The catalytic subdomain A stretch occupies residues 153 to 264; it reads LPQVSVVFIF…TGWAEPALSR (112 aa). Substrate is bound by residues D194 and R225. Residues D248, H250, and H380 each contribute to the Mn(2+) site. Positions 321-383 are catalytic subdomain B; sequence PIRTPAMIGC…PCSRVAHIER (63 aa). Positions 383 and 388 each coordinate substrate. N463 carries an N-linked (GlcNAc...) asparagine glycan. Positions 467–603 constitute a Ricin B-type lectin domain; it reads TYGEVRNSKA…KWMIRNWIKH (137 aa). Disulfide bonds link C480–C496, C528–C543, and C570–C590.

Belongs to the glycosyltransferase 2 family. GalNAc-T subfamily. Requires Mn(2+) as cofactor.

It is found in the golgi apparatus membrane. The enzyme catalyses L-seryl-[protein] + UDP-N-acetyl-alpha-D-galactosamine = a 3-O-[N-acetyl-alpha-D-galactosaminyl]-L-seryl-[protein] + UDP + H(+). It carries out the reaction L-threonyl-[protein] + UDP-N-acetyl-alpha-D-galactosamine = a 3-O-[N-acetyl-alpha-D-galactosaminyl]-L-threonyl-[protein] + UDP + H(+). It functions in the pathway protein modification; protein glycosylation. Functionally, catalyzes the initial reaction in O-linked oligosaccharide biosynthesis, the transfer of an N-acetyl-D-galactosamine residue to a serine or threonine residue on the protein receptor. Does not glycosylate apomucin or SDC3. The protein is Polypeptide N-acetylgalactosaminyltransferase 9 (GALNT9) of Macaca fascicularis (Crab-eating macaque).